Reading from the N-terminus, the 655-residue chain is UvrABC system protein B (655 aa).

The Helicase ATP-binding domain maps to Asp-25–Glu-181. Gly-38 to Thr-45 serves as a coordination point for ATP. The Beta-hairpin signature appears at Tyr-91 to Val-114. The region spanning Gln-428–Leu-590 is the Helicase C-terminal domain. Residues Arg-615–Leu-650 enclose the UVR domain.

Belongs to the UvrB family. In terms of assembly, forms a heterotetramer with UvrA during the search for lesions. Interacts with UvrC in an incision complex.

It localises to the cytoplasm. The UvrABC repair system catalyzes the recognition and processing of DNA lesions. A damage recognition complex composed of 2 UvrA and 2 UvrB subunits scans DNA for abnormalities. Upon binding of the UvrA(2)B(2) complex to a putative damaged site, the DNA wraps around one UvrB monomer. DNA wrap is dependent on ATP binding by UvrB and probably causes local melting of the DNA helix, facilitating insertion of UvrB beta-hairpin between the DNA strands. Then UvrB probes one DNA strand for the presence of a lesion. If a lesion is found the UvrA subunits dissociate and the UvrB-DNA preincision complex is formed. This complex is subsequently bound by UvrC and the second UvrB is released. If no lesion is found, the DNA wraps around the other UvrB subunit that will check the other stand for damage. The protein is UvrABC system protein B of Methanobrevibacter smithii (strain ATCC 35061 / DSM 861 / OCM 144 / PS).